Consider the following 167-residue polypeptide: NAD(P)H-quinone oxidoreductase subunit I, chloroplastic (167 aa).

4Fe-4S ferredoxin-type domains are found at residues 55 to 84 (GRIH…VDWK) and 95 to 124 (LNYS…MTEE). 8 residues coordinate [4Fe-4S] cluster: C64, C67, C70, C74, C104, C107, C110, and C114.

The protein belongs to the complex I 23 kDa subunit family. In terms of assembly, NDH is composed of at least 16 different subunits, 5 of which are encoded in the nucleus. The cofactor is [4Fe-4S] cluster.

The protein localises to the plastid. Its subcellular location is the chloroplast thylakoid membrane. It carries out the reaction a plastoquinone + NADH + (n+1) H(+)(in) = a plastoquinol + NAD(+) + n H(+)(out). The enzyme catalyses a plastoquinone + NADPH + (n+1) H(+)(in) = a plastoquinol + NADP(+) + n H(+)(out). Its function is as follows. NDH shuttles electrons from NAD(P)H:plastoquinone, via FMN and iron-sulfur (Fe-S) centers, to quinones in the photosynthetic chain and possibly in a chloroplast respiratory chain. The immediate electron acceptor for the enzyme in this species is believed to be plastoquinone. Couples the redox reaction to proton translocation, and thus conserves the redox energy in a proton gradient. In Aethionema cordifolium (Lebanon stonecress), this protein is NAD(P)H-quinone oxidoreductase subunit I, chloroplastic.